The sequence spans 145 residues: D-aminoacyl-tRNA deacylase (145 aa).

Residues 137–138 (GP) carry the Gly-cisPro motif, important for rejection of L-amino acids motif.

Belongs to the DTD family. Homodimer.

Its subcellular location is the cytoplasm. The catalysed reaction is glycyl-tRNA(Ala) + H2O = tRNA(Ala) + glycine + H(+). The enzyme catalyses a D-aminoacyl-tRNA + H2O = a tRNA + a D-alpha-amino acid + H(+). Its function is as follows. An aminoacyl-tRNA editing enzyme that deacylates mischarged D-aminoacyl-tRNAs. Also deacylates mischarged glycyl-tRNA(Ala), protecting cells against glycine mischarging by AlaRS. Acts via tRNA-based rather than protein-based catalysis; rejects L-amino acids rather than detecting D-amino acids in the active site. By recycling D-aminoacyl-tRNA to D-amino acids and free tRNA molecules, this enzyme counteracts the toxicity associated with the formation of D-aminoacyl-tRNA entities in vivo and helps enforce protein L-homochirality. The protein is D-aminoacyl-tRNA deacylase of Shewanella putrefaciens (strain CN-32 / ATCC BAA-453).